A 470-amino-acid polypeptide reads, in one-letter code: uncharacterized protein (470 aa).

In terms of domain architecture, SPX spans 1-337; the sequence is MKFGHDFKRA…SLTAQPLFFQ (337 aa). The tract at residues 118–145 is disordered; the sequence is ASNVPSTPSDSTQQPPTNTLPSVSASSQ. Residues 122–136 are compositionally biased toward low complexity; sequence PSTPSDSTQQPPTNT. The RING-type zinc finger occupies 374–413; that stretch reads CAICSNVAYKPVRLGCSHVFCLHCLIILQKQKVDFCPLCR.

It is found in the cytoplasm. This is an uncharacterized protein from Schizosaccharomyces pombe (strain 972 / ATCC 24843) (Fission yeast).